We begin with the raw amino-acid sequence, 506 residues long: GPI mannosyltransferase 3 (506 aa).

The N-linked (GlcNAc...) asparagine glycan is linked to Asn-115. A run of 6 helical transmembrane segments spans residues 180–200, 229–249, 257–277, 285–305, 330–350, and 358–378; these read AFAC…LLFW, YGRL…NIIA, FVFP…SSLY, YLSQ…LLTM, FVYP…SSFS, and FFFL…RFHQ. N-linked (GlcNAc...) asparagine glycosylation is present at Asn-395.

It belongs to the glycosyltransferase 22 family. PIGB subfamily.

It is found in the endoplasmic reticulum membrane. It functions in the pathway glycolipid biosynthesis; glycosylphosphatidylinositol-anchor biosynthesis. In terms of biological role, mannosyltransferase involved in glycosylphosphatidylinositol-anchor biosynthesis. Transfers the third mannose to Man2-GlcN-acyl-PI during GPI precursor assembly. The polypeptide is GPI mannosyltransferase 3 (gpi10) (Schizosaccharomyces pombe (strain 972 / ATCC 24843) (Fission yeast)).